A 343-amino-acid polypeptide reads, in one-letter code: N-acetyl-gamma-glutamyl-phosphate reductase (343 aa).

Residue Cys-146 is part of the active site.

This sequence belongs to the NAGSA dehydrogenase family. Type 1 subfamily.

The protein localises to the cytoplasm. The enzyme catalyses N-acetyl-L-glutamate 5-semialdehyde + phosphate + NADP(+) = N-acetyl-L-glutamyl 5-phosphate + NADPH + H(+). It functions in the pathway amino-acid biosynthesis; L-arginine biosynthesis; N(2)-acetyl-L-ornithine from L-glutamate: step 3/4. Catalyzes the NADPH-dependent reduction of N-acetyl-5-glutamyl phosphate to yield N-acetyl-L-glutamate 5-semialdehyde. The chain is N-acetyl-gamma-glutamyl-phosphate reductase from Acidothermus cellulolyticus (strain ATCC 43068 / DSM 8971 / 11B).